Reading from the N-terminus, the 169-residue chain is Ubiquitin-fold modifier-conjugating enzyme 1 (169 aa).

Cys116 acts as the Glycyl thioester intermediate in catalysis.

It belongs to the ubiquitin-conjugating enzyme family. UFC1 subfamily.

In terms of biological role, E2-like enzyme which forms an intermediate with UFM1 via a thioester linkage. In Nematostella vectensis (Starlet sea anemone), this protein is Ubiquitin-fold modifier-conjugating enzyme 1.